We begin with the raw amino-acid sequence, 69 residues long: DNA-directed RNA polymerase subunit omega (69 aa).

This sequence belongs to the RNA polymerase subunit omega family. In terms of assembly, the RNAP catalytic core consists of 2 alpha, 1 beta, 1 beta' and 1 omega subunit. When a sigma factor is associated with the core the holoenzyme is formed, which can initiate transcription.

It catalyses the reaction RNA(n) + a ribonucleoside 5'-triphosphate = RNA(n+1) + diphosphate. Functionally, promotes RNA polymerase assembly. Latches the N- and C-terminal regions of the beta' subunit thereby facilitating its interaction with the beta and alpha subunits. This Carboxydothermus hydrogenoformans (strain ATCC BAA-161 / DSM 6008 / Z-2901) protein is DNA-directed RNA polymerase subunit omega.